We begin with the raw amino-acid sequence, 361 residues long: Spermatogenesis-associated protein 17 (361 aa).

IQ domains are found at residues 32–61 (ENDA…IVTI), 55–84 (LNRI…VAYY), and 91–120 (YNAM…LKEY).

The protein resides in the cytoplasm. The sequence is that of Spermatogenesis-associated protein 17 (SPATA17) from Homo sapiens (Human).